Consider the following 449-residue polypeptide: Glucose-6-phosphate isomerase (449 aa).

The active-site Proton donor is the E291. Residues H312 and K426 contribute to the active site.

It belongs to the GPI family.

Its subcellular location is the cytoplasm. The enzyme catalyses alpha-D-glucose 6-phosphate = beta-D-fructose 6-phosphate. It participates in carbohydrate biosynthesis; gluconeogenesis. Its pathway is carbohydrate degradation; glycolysis; D-glyceraldehyde 3-phosphate and glycerone phosphate from D-glucose: step 2/4. In terms of biological role, catalyzes the reversible isomerization of glucose-6-phosphate to fructose-6-phosphate. The polypeptide is Glucose-6-phosphate isomerase (Streptococcus pyogenes serotype M5 (strain Manfredo)).